We begin with the raw amino-acid sequence, 286 residues long: Glycine--tRNA ligase alpha subunit (286 aa).

This sequence belongs to the class-II aminoacyl-tRNA synthetase family. As to quaternary structure, tetramer of two alpha and two beta subunits.

Its subcellular location is the cytoplasm. It catalyses the reaction tRNA(Gly) + glycine + ATP = glycyl-tRNA(Gly) + AMP + diphosphate. This is Glycine--tRNA ligase alpha subunit from Campylobacter lari (strain RM2100 / D67 / ATCC BAA-1060).